The primary structure comprises 345 residues: Anthranilate phosphoribosyltransferase (345 aa).

Residues Gly-84, 87 to 88 (GD), Thr-92, 94 to 97 (NIST), 112 to 120 (KHGNRSVSS), and Ser-124 contribute to the 5-phospho-alpha-D-ribose 1-diphosphate site. Position 84 (Gly-84) interacts with anthranilate. A Mg(2+)-binding site is contributed by Ser-96. Anthranilate is bound at residue Asn-115. Position 170 (Arg-170) interacts with anthranilate. Mg(2+)-binding residues include Asp-229 and Glu-230.

Belongs to the anthranilate phosphoribosyltransferase family. In terms of assembly, homodimer. Mg(2+) serves as cofactor.

The enzyme catalyses N-(5-phospho-beta-D-ribosyl)anthranilate + diphosphate = 5-phospho-alpha-D-ribose 1-diphosphate + anthranilate. It participates in amino-acid biosynthesis; L-tryptophan biosynthesis; L-tryptophan from chorismate: step 2/5. Its function is as follows. Catalyzes the transfer of the phosphoribosyl group of 5-phosphorylribose-1-pyrophosphate (PRPP) to anthranilate to yield N-(5'-phosphoribosyl)-anthranilate (PRA). This chain is Anthranilate phosphoribosyltransferase, found in Xanthomonas axonopodis pv. citri (strain 306).